Here is a 184-residue protein sequence, read N- to C-terminus: MKLTMFVVGLLGLLAAPGFAYTVNINGNDGNVDGSGQQSVSINGVHNVANIDNNNGWDSWNSLWDYENSFAATRLFSKKSCIVHRMNKDAMPSLQDLDTMVKEQKGKGPGGAPPKDLMYSVNPTRVEDLNTFGPKIAGMCRGIPTYVAEEIPGPNQPLYSKKCYTADILWILRMSFCGTSVETY.

Positions 1-20 are cleaved as a signal peptide; that stretch reads MKLTMFVVGLLGLLAAPGFA. Residues 54 to 148 form the BRICHOS domain; it reads NNGWDSWNSL…MCRGIPTYVA (95 aa). A disulfide bridge links Cys-81 with Cys-140.

It belongs to the gastrokine family. Expressed in the stomach. Highly expressed specifically in surface cells of the antrum mucosa from where it is secreted.

It is found in the secreted. The protein localises to the cytoplasmic granule. The protein resides in the golgi apparatus. In terms of biological role, has mitogenic activity and may be involved in maintaining the integrity of the gastric mucosal epithelium. This Mus musculus (Mouse) protein is Gastrokine-1 (Gkn1).